We begin with the raw amino-acid sequence, 986 residues long: Vacuolar membrane protease (986 aa).

Residues 1–20 (MATPRAQKFNPIAFTPGPVT) lie on the Cytoplasmic side of the membrane. The chain crosses the membrane as a helical span at residues 21-41 (LITTIVYLALLIPILVISLVV). Topologically, residues 42–392 (PPAPETSPEG…AFAVFRLHTL (351 aa)) are vacuolar. 3 N-linked (GlcNAc...) asparagine glycosylation sites follow: Asn-53, Asn-116, and Asn-119. 2 residues coordinate Zn(2+): His-175 and Asp-187. Residue Glu-221 is the Proton acceptor of the active site. Glu-222 is a Zn(2+) binding site. Asn-238 is a glycosylation site (N-linked (GlcNAc...) asparagine). Zn(2+) contacts are provided by Glu-247 and His-320. The helical transmembrane segment at 393–413 (FALSVTLLIVAPLVIFITAIV) threads the bilayer. Topologically, residues 414–447 (LSKTDRMYLFSMSKSLGGTDERVSLRGLRGLFRT) are cytoplasmic. The chain crosses the membrane as a helical span at residues 448-468 (PIILAVATVIPIGLAYLLEKV). At 469–477 (NPYIVHSSQ) the chain is on the vacuolar side. The chain crosses the membrane as a helical span at residues 478–498 (FSVWSMMISVWIFLAWFLACA). Residues 499-509 (ADFFRPSALHR) lie on the Cytoplasmic side of the membrane. A helical transmembrane segment spans residues 510 to 530 (AYSYTWIFIATWVMLVINTVY). Residues 531-534 (ANQK) lie on the Vacuolar side of the membrane. The helical transmembrane segment at 535 to 555 (GIAAGYFVFFYFSGSFLATWV) threads the bilayer. The Cytoplasmic segment spans residues 556-665 (SYLELFALPR…WSWTLPRWTW (110 aa)). The disordered stretch occupies residues 595–620 (ELPSDTGPHAEYPGDADETDPTESTS). Residues 666–686 (VLQLLLLAPIVLILVGQLALF) form a helical membrane-spanning segment. The Vacuolar segment spans residues 687-702 (LTTSMSQVGSDGVSTF). The helical transmembrane segment at 703–723 (IVYLACAVFTTLLFAPLFPFI) threads the bilayer. At 724 to 729 (HRFTYH) the chain is on the cytoplasmic side. A helical membrane pass occupies residues 730–750 (IPTFLFLVFVGTLIYNLVAFP). Over 751-986 (FSPANRLKMF…VEASHGITIQ (236 aa)) the chain is Vacuolar. N-linked (GlcNAc...) asparagine glycosylation is found at Asn-797, Asn-840, and Asn-948.

Belongs to the peptidase M28 family. It depends on Zn(2+) as a cofactor.

The protein localises to the vacuole membrane. Functionally, may be involved in vacuolar sorting and osmoregulation. The protein is Vacuolar membrane protease of Blastomyces gilchristii (strain SLH14081) (Blastomyces dermatitidis).